Reading from the N-terminus, the 215-residue chain is Cytochrome b6 (215 aa).

Residues 32-52 (IFHCLGGITLTCFLVQVATGF) traverse the membrane as a helical segment. C35 provides a ligand contact to heme c. Heme b contacts are provided by H86 and H100. The next 3 helical transmembrane spans lie at 90-110 (ASMM…TGGF), 116-136 (LTWV…VTGY), and 186-206 (LHTF…FSMI). Heme b is bound by residues H187 and H202.

The protein belongs to the cytochrome b family. PetB subfamily. As to quaternary structure, the 4 large subunits of the cytochrome b6-f complex are cytochrome b6, subunit IV (17 kDa polypeptide, PetD), cytochrome f and the Rieske protein, while the 4 small subunits are PetG, PetL, PetM and PetN. The complex functions as a dimer. The cofactor is heme b. Requires heme c as cofactor.

Its subcellular location is the plastid. It is found in the chloroplast thylakoid membrane. In terms of biological role, component of the cytochrome b6-f complex, which mediates electron transfer between photosystem II (PSII) and photosystem I (PSI), cyclic electron flow around PSI, and state transitions. The sequence is that of Cytochrome b6 from Nymphaea alba (White water-lily).